A 106-amino-acid chain; its full sequence is Integration host factor subunit alpha (106 aa).

Belongs to the bacterial histone-like protein family. Heterodimer of an alpha and a beta chain.

Its function is as follows. This protein is one of the two subunits of integration host factor, a specific DNA-binding protein that functions in genetic recombination as well as in transcriptional and translational control. The chain is Integration host factor subunit alpha from Paramagnetospirillum magneticum (strain ATCC 700264 / AMB-1) (Magnetospirillum magneticum).